We begin with the raw amino-acid sequence, 343 residues long: Phenylalanine--tRNA ligase alpha subunit (343 aa).

Glu268 provides a ligand contact to Mg(2+).

Belongs to the class-II aminoacyl-tRNA synthetase family. Phe-tRNA synthetase alpha subunit type 1 subfamily. In terms of assembly, tetramer of two alpha and two beta subunits. Mg(2+) serves as cofactor.

It localises to the cytoplasm. The enzyme catalyses tRNA(Phe) + L-phenylalanine + ATP = L-phenylalanyl-tRNA(Phe) + AMP + diphosphate + H(+). This chain is Phenylalanine--tRNA ligase alpha subunit, found in Cupriavidus taiwanensis (strain DSM 17343 / BCRC 17206 / CCUG 44338 / CIP 107171 / LMG 19424 / R1) (Ralstonia taiwanensis (strain LMG 19424)).